Here is a 336-residue protein sequence, read N- to C-terminus: tRNA N6-adenosine threonylcarbamoyltransferase (336 aa).

2 residues coordinate Fe cation: histidine 114 and histidine 118. Residues 136–140 (LVSGG), aspartate 169, glycine 182, aspartate 186, and asparagine 275 each bind substrate. Position 301 (aspartate 301) interacts with Fe cation.

Belongs to the KAE1 / TsaD family. Fe(2+) is required as a cofactor.

The protein localises to the cytoplasm. It carries out the reaction L-threonylcarbamoyladenylate + adenosine(37) in tRNA = N(6)-L-threonylcarbamoyladenosine(37) in tRNA + AMP + H(+). In terms of biological role, required for the formation of a threonylcarbamoyl group on adenosine at position 37 (t(6)A37) in tRNAs that read codons beginning with adenine. Is involved in the transfer of the threonylcarbamoyl moiety of threonylcarbamoyl-AMP (TC-AMP) to the N6 group of A37, together with TsaE and TsaB. TsaD likely plays a direct catalytic role in this reaction. The protein is tRNA N6-adenosine threonylcarbamoyltransferase of Streptococcus pneumoniae (strain JJA).